The chain runs to 1387 residues: DNA-directed RNA polymerase subunit beta' (1387 aa).

The Zn(2+) site is built by Cys-70, Cys-72, Cys-85, and Cys-88. Mg(2+) is bound by residues Asp-461, Asp-463, and Asp-465. Residues Cys-808, Cys-882, Cys-889, and Cys-892 each contribute to the Zn(2+) site. Residues 1367–1387 (QDEAKGVGQETPRLSGQEAAE) form a disordered region.

This sequence belongs to the RNA polymerase beta' chain family. The RNAP catalytic core consists of 2 alpha, 1 beta, 1 beta' and 1 omega subunit. When a sigma factor is associated with the core the holoenzyme is formed, which can initiate transcription. It depends on Mg(2+) as a cofactor. Zn(2+) serves as cofactor.

It catalyses the reaction RNA(n) + a ribonucleoside 5'-triphosphate = RNA(n+1) + diphosphate. Its function is as follows. DNA-dependent RNA polymerase catalyzes the transcription of DNA into RNA using the four ribonucleoside triphosphates as substrates. This is DNA-directed RNA polymerase subunit beta' from Granulibacter bethesdensis (strain ATCC BAA-1260 / CGDNIH1).